The sequence spans 346 residues: NADH-quinone oxidoreductase subunit H (346 aa).

The next 8 membrane-spanning stretches (helical) occupy residues Ile-6–Tyr-26, Val-76–Val-96, Ile-128–Ala-148, Ile-166–Leu-186, Leu-198–Phe-218, Ile-260–Ile-280, Leu-289–Val-309, and Leu-324–Ile-344.

It belongs to the complex I subunit 1 family. In terms of assembly, NDH-1 is composed of 14 different subunits. Subunits NuoA, H, J, K, L, M, N constitute the membrane sector of the complex.

It is found in the cell inner membrane. It catalyses the reaction a quinone + NADH + 5 H(+)(in) = a quinol + NAD(+) + 4 H(+)(out). Functionally, NDH-1 shuttles electrons from NADH, via FMN and iron-sulfur (Fe-S) centers, to quinones in the respiratory chain. The immediate electron acceptor for the enzyme in this species is believed to be ubiquinone. Couples the redox reaction to proton translocation (for every two electrons transferred, four hydrogen ions are translocated across the cytoplasmic membrane), and thus conserves the redox energy in a proton gradient. This subunit may bind ubiquinone. This chain is NADH-quinone oxidoreductase subunit H, found in Leptospira interrogans serogroup Icterohaemorrhagiae serovar copenhageni (strain Fiocruz L1-130).